The primary structure comprises 667 residues: Autophagy-related protein 20 (667 aa).

Positions 1–94 (MKQKKNRFGS…DESFKSTRAN (94 aa)) are disordered. Residues 38–47 (SSSSRSSSTQ) are compositionally biased toward low complexity. Residues 55–67 (SLASVHTSDMHQS) are compositionally biased toward polar residues. Over residues 76 to 85 (DDNPFLDQDD) the composition is skewed to acidic residues. The PX domain occupies 185 to 331 (KLINDRVQIL…DFLDPNNINW (147 aa)). A 1,2-diacyl-sn-glycero-3-phospho-(1D-myo-inositol-3-phosphate) is bound by residues Arg222, Ser224, Lys248, and Arg297. Residues 524-562 (ELQRGVQPRNGNTASGASGNDESSVKKPQASKSQSSSYG) are disordered. Over residues 532–545 (RNGNTASGASGNDE) the composition is skewed to polar residues. Residues 549-560 (KKPQASKSQSSS) are compositionally biased toward low complexity. Residues 588–652 (QTTMANLIKE…SKYLKDYAKK (65 aa)) are a coiled coil.

The protein belongs to the sorting nexin family.

The protein localises to the endosome membrane. It is found in the preautophagosomal structure membrane. Required for cytoplasm to vacuole transport (Cvt), pexophagy and mitophagy. Also involved in endoplasmic reticulum-specific autophagic process and is essential for the survival of cells subjected to severe ER stress. Functions in protein retrieval from the endocytic pathway. The sequence is that of Autophagy-related protein 20 (ATG20) from Vanderwaltozyma polyspora (strain ATCC 22028 / DSM 70294 / BCRC 21397 / CBS 2163 / NBRC 10782 / NRRL Y-8283 / UCD 57-17) (Kluyveromyces polysporus).